Consider the following 96-residue polypeptide: Co-chaperonin GroES (96 aa).

It belongs to the GroES chaperonin family. In terms of assembly, heptamer of 7 subunits arranged in a ring. Interacts with the chaperonin GroEL.

The protein resides in the cytoplasm. In terms of biological role, together with the chaperonin GroEL, plays an essential role in assisting protein folding. The GroEL-GroES system forms a nano-cage that allows encapsulation of the non-native substrate proteins and provides a physical environment optimized to promote and accelerate protein folding. GroES binds to the apical surface of the GroEL ring, thereby capping the opening of the GroEL channel. This Histophilus somni (strain 129Pt) (Haemophilus somnus) protein is Co-chaperonin GroES.